Reading from the N-terminus, the 1382-residue chain is Hepatocyte growth factor receptor (1382 aa).

An N-terminal signal peptide occupies residues 1–24 (MKAPAVLAPGILVLLFTLVQKSYG). Topologically, residues 25-935 (ECKEALVKSE…VQPDQNFTGL (911 aa)) are extracellular. Residues 27-516 (KEALVKSEMN…TGKKITRIPL (490 aa)) enclose the Sema domain. N45 carries an N-linked (GlcNAc...) asparagine glycan. Cystine bridges form between C95–C101, C98–C160, C133–C141, and C173–C176. N-linked (GlcNAc...) asparagine glycosylation occurs at N106. N203 and N359 each carry an N-linked (GlcNAc...) asparagine glycan. Disulfide bonds link C299/C364 and C386/C398. Residues N400 and N406 are each glycosylated (N-linked (GlcNAc...) asparagine). 4 cysteine pairs are disulfide-bonded: C521-C539, C527-C562, C530-C546, and C542-C552. 3 IPT/TIG domains span residues 564–656 (PAIY…FSYV), 658–740 (PIIT…FSYQ), and 743–837 (PIVY…LIYV). The O-linked (Man) threonine glycan is linked to T583. N608 and N636 each carry an N-linked (GlcNAc...) asparagine glycan. Residues T677 and T762 are each glycosylated (O-linked (Man) threonine). N786, N880, and N931 each carry an N-linked (GlcNAc...) asparagine glycan. A helical membrane pass occupies residues 936-956 (IAGVISISTIVLLLLGLFLWL). The Cytoplasmic portion of the chain corresponds to 957–1379 (KRKKQIKDLG…LSSQDNIDGE (423 aa)). Residue S967 is modified to Phosphoserine. T978 carries the phosphothreonine modification. Residues S991, S998, and S1001 each carry the phosphoserine modification. Y1004 is modified (phosphotyrosine). One can recognise a Protein kinase domain in the interval 1079–1346 (VHFNEVIGRG…RISAIFSTFI (268 aa)). Residues 1085-1093 (IGRGHFGCV) and K1111 each bind ATP. Catalysis depends on D1205, which acts as the Proton acceptor. The interval 1213–1382 (LDEKFTVKVA…QDNIDGEGDT (170 aa)) is interaction with RANBP9. A Phosphotyrosine modification is found at Y1231. Phosphotyrosine; by autocatalysis occurs at positions 1235 and 1236. A Phosphothreonine modification is found at T1290. The tract at residues 1321–1360 (WHPRAELRPSFSELVSRISAIFSTFIGEHYVHVNATYVNV) is interaction with MUC20. 2 positions are modified to phosphotyrosine; by autocatalysis: Y1350 and Y1357. Y1366 is modified (phosphotyrosine).

This sequence belongs to the protein kinase superfamily. Tyr protein kinase family. Heterodimer made of an alpha chain (50 kDa) and a beta chain (145 kDa) which are disulfide linked. Binds PLXNB1. Interacts when phosphorylated with downstream effectors including STAT3, PIK3R1, SRC, PCLG1, GRB2 and GAB1. Interacts with SPSB1, SPSB2 and SPSB4. Interacts with INPP5D/SHIP1. When phosphorylated at Tyr-1357, interacts with INPPL1/SHIP2. Interacts with RANBP9 and RANBP10, as well as SPSB1, SPSB2, SPSB3 and SPSB4. SPSB1 binding occurs in the presence and in the absence of HGF, however HGF treatment has a positive effect on this interaction. Interacts with MUC20; prevents interaction with GRB2 and suppresses hepatocyte growth factor-induced cell proliferation. Interacts with GRB10. Interacts with PTPN1 and PTPN2. Interacts with HSP90AA1 and HSP90AB1; the interaction suppresses MET kinase activity. Interacts with tensin TNS3. Interacts (when phosphorylated) with tensin TNS4 (via SH2 domain); the interaction increases MET protein stability by inhibiting MET endocytosis and subsequent lysosomal degradation. In terms of assembly, (Microbial infection) Interacts with L.monocytogenes InlB. InlB probably dimerizes upon binding to MET, which encourages subsequent dimerization of MET. Autophosphorylated in response to ligand binding on Tyr-1235 and Tyr-1236 in the kinase domain leading to further phosphorylation of Tyr-1350 and Tyr-1357 in the C-terminal multifunctional docking site. Dephosphorylated by PTPRJ at Tyr-1350 and Tyr-1366. Dephosphorylated by PTPN1 and PTPN2. Post-translationally, ubiquitinated. Ubiquitination by CBL regulates the receptor stability and activity through proteasomal degradation. In terms of processing, (Microbial infection) Tyrosine phosphorylation is stimulated by L.monocytogenes InlB. O-mannosylation of IPT/TIG domains by TMEM260 is required for protein maturation. O-mannosylated residues are composed of single mannose glycans that are not elongated or modified.

The protein resides in the membrane. The enzyme catalyses L-tyrosyl-[protein] + ATP = O-phospho-L-tyrosyl-[protein] + ADP + H(+). With respect to regulation, in its inactive state, the C-terminal tail interacts with the catalytic domain and inhibits the kinase activity. Upon ligand binding, the C-terminal tail is displaced and becomes phosphorylated, thus increasing the kinase activity. Functionally, receptor tyrosine kinase that transduces signals from the extracellular matrix into the cytoplasm by binding to hepatocyte growth factor/HGF ligand. Regulates many physiological processes including proliferation, scattering, morphogenesis and survival. Ligand binding at the cell surface induces autophosphorylation of MET on its intracellular domain that provides docking sites for downstream signaling molecules. Following activation by ligand, interacts with the PI3-kinase subunit PIK3R1, PLCG1, SRC, GRB2, STAT3 or the adapter GAB1. Recruitment of these downstream effectors by MET leads to the activation of several signaling cascades including the RAS-ERK, PI3 kinase-AKT, or PLCgamma-PKC. The RAS-ERK activation is associated with the morphogenetic effects while PI3K/AKT coordinates prosurvival effects. During embryonic development, MET signaling plays a role in gastrulation, development and migration of muscles and neuronal precursors, angiogenesis and kidney formation. In adults, participates in wound healing as well as organ regeneration and tissue remodeling. Also promotes differentiation and proliferation of hematopoietic cells. In terms of biological role, (Microbial infection) Acts as a receptor for Listeria monocytogenes internalin InlB, mediating entry of the pathogen into cells. The polypeptide is Hepatocyte growth factor receptor (MET) (Canis lupus familiaris (Dog)).